The primary structure comprises 200 residues: MRDMLQLVPMVVEQSARGERSFDIYSRLLRERIIFLNGEVNDAMSGLVCAQLLFLEAENPNRPINLYINSYGGVVTSGLAMYDTMQFIKAPVHTLCMGTARSMGSFLLMAGERGHRAALPNASLHVHQPLGGFQGQASDILIHANEMQETKRRITRLYAQHCGRTEAEVERTLDRDHFMTAQQGVEWGLIDRVFAERDAT.

The active-site Nucleophile is Ser-102. His-127 is an active-site residue.

It belongs to the peptidase S14 family. In terms of assembly, fourteen ClpP subunits assemble into 2 heptameric rings which stack back to back to give a disk-like structure with a central cavity, resembling the structure of eukaryotic proteasomes.

The protein localises to the cytoplasm. The catalysed reaction is Hydrolysis of proteins to small peptides in the presence of ATP and magnesium. alpha-casein is the usual test substrate. In the absence of ATP, only oligopeptides shorter than five residues are hydrolyzed (such as succinyl-Leu-Tyr-|-NHMec, and Leu-Tyr-Leu-|-Tyr-Trp, in which cleavage of the -Tyr-|-Leu- and -Tyr-|-Trp bonds also occurs).. In terms of biological role, cleaves peptides in various proteins in a process that requires ATP hydrolysis. Has a chymotrypsin-like activity. Plays a major role in the degradation of misfolded proteins. This chain is ATP-dependent Clp protease proteolytic subunit 1, found in Bradyrhizobium diazoefficiens (strain JCM 10833 / BCRC 13528 / IAM 13628 / NBRC 14792 / USDA 110).